Reading from the N-terminus, the 303-residue chain is Sulfate adenylyltransferase subunit 2 (303 aa).

Belongs to the PAPS reductase family. CysD subfamily. In terms of assembly, heterodimer composed of CysD, the smaller subunit, and CysN.

It carries out the reaction sulfate + ATP + H(+) = adenosine 5'-phosphosulfate + diphosphate. It participates in sulfur metabolism; hydrogen sulfide biosynthesis; sulfite from sulfate: step 1/3. Its function is as follows. With CysN forms the ATP sulfurylase (ATPS) that catalyzes the adenylation of sulfate producing adenosine 5'-phosphosulfate (APS) and diphosphate, the first enzymatic step in sulfur assimilation pathway. APS synthesis involves the formation of a high-energy phosphoric-sulfuric acid anhydride bond driven by GTP hydrolysis by CysN coupled to ATP hydrolysis by CysD. The protein is Sulfate adenylyltransferase subunit 2 of Akkermansia muciniphila (strain ATCC BAA-835 / DSM 22959 / JCM 33894 / BCRC 81048 / CCUG 64013 / CIP 107961 / Muc).